The sequence spans 122 residues: Probable F-box protein At4g23960 (122 aa).

Residues 1 to 45 (MIEQLFPEVTCYALRYLDYSSLCQLSMTSSSMRKTANDDVLWRAL) enclose the F-box domain.

The sequence is that of Probable F-box protein At4g23960 from Arabidopsis thaliana (Mouse-ear cress).